The following is a 304-amino-acid chain: Acetylglutamate kinase (304 aa).

Substrate is bound by residues 69 to 70, Arg-91, and Asn-202; that span reads GG.

Belongs to the acetylglutamate kinase family. ArgB subfamily.

The protein resides in the cytoplasm. The enzyme catalyses N-acetyl-L-glutamate + ATP = N-acetyl-L-glutamyl 5-phosphate + ADP. It participates in amino-acid biosynthesis; L-arginine biosynthesis; N(2)-acetyl-L-ornithine from L-glutamate: step 2/4. Functionally, catalyzes the ATP-dependent phosphorylation of N-acetyl-L-glutamate. The polypeptide is Acetylglutamate kinase (Caulobacter sp. (strain K31)).